A 103-amino-acid polypeptide reads, in one-letter code: Large ribosomal subunit protein bL21 (103 aa).

This sequence belongs to the bacterial ribosomal protein bL21 family. In terms of assembly, part of the 50S ribosomal subunit. Contacts protein L20.

Its function is as follows. This protein binds to 23S rRNA in the presence of protein L20. The chain is Large ribosomal subunit protein bL21 from Shewanella amazonensis (strain ATCC BAA-1098 / SB2B).